The sequence spans 894 residues: MSPEKSQEESPEEDTERTERKPMVKDAFKDISIYFTKEEWAEMGDWEKTRYRNVKRNYNALITIGLRATRPAFMCHRRQAIKLQVDDTEDSDEEWTPRQQVKPPWMALRVEQRKHQKGMPKASFSNESSLKELSRTANLLNASGSEQAQKPVSPSGEASTSGQHSRLKLELRKKETERKMYSLRERKGHAYKEVSEPQDDDYLYCEMCQNFFIDSCAAHGPPTFVKDSAVDKGHPNRSALSLPPGLRIGPSGIPQAGLGVWNEASDLPLGLHFGPYEGRITEDEEAANNGYSWLITKGRNCYEYVDGKDKSWANWMRYVNCARDDEEQNLVAFQYHRQIFYRTCRVIRPGCELLVWYGDEYGQELGIKWGSKWKKELMAGREPKPEIHPCPSCCLAFSSQKFLSQHVERNHSSQNFPGPSARKLLQPENPCPGDQNQEQQYPDPHSRNDKTKGQEIKERSKLLNKRTWQREISRAFSSPPKGQMGSCRVGKRIMEEESRTGQKVNPGNTGKLFVGVGISRIAKVKYGECGQGFSVKSDVITHQRTHTGEKLYVCRECGRGFSWKSHLLIHQRIHTGEKPYVCRECGRGFSWQSVLLTHQRTHTGEKPYVCRECGRGFSRQSVLLTHQRRHTGEKPYVCRECGRGFSRQSVLLTHQRRHTGEKPYVCRECGRGFSWQSVLLTHQRTHTGEKPYVCRECGRGFSWQSVLLTHQRTHTGEKPYVCRECGRGFSNKSHLLRHQRTHTGEKPYVCRECGRGFRDKSHLLRHQRTHTGEKPYVCRECGRGFRDKSNLLSHQRTHTGEKPYVCRECGRGFSNKSHLLRHQRTHTGEKPYVCRECGRGFRNKSHLLRHQRTHTGEKPYVCRECGRGFSDRSSLCYHQRTHTGEKPYVCREDE.

2 disordered regions span residues 1–23 (MSPEKSQEESPEEDTERTERKPM) and 143–174 (SGSEQAQKPVSPSGEASTSGQHSRLKLELRKK). In terms of domain architecture, KRAB-related spans 23-86 (MVKDAFKDIS…RRQAIKLQVD (64 aa)). A compositionally biased stretch (polar residues) spans 143–164 (SGSEQAQKPVSPSGEASTSGQH). Zn(2+) contacts are provided by C205, C208, C216, and H219. An SET domain is found at 244–358 (PGLRIGPSGI…PGCELLVWYG (115 aa)). S-adenosyl-L-methionine-binding positions include 256-258 (AGL), Y291, and 320-321 (NC). Residue 288–294 (NNGYSWL) participates in substrate binding. Residue Y357 coordinates substrate. Residue K368 is modified to N6,N6,N6-trimethyllysine; alternate. N6-methyllysine; alternate is present on K368. An N6-methyllysine mark is found at K372 and K374. A C2H2-type 1 zinc finger spans residues 388–411 (HPCPSCCLAFSSQKFLSQHVERNH). Zn(2+) is bound by residues C390, C393, H406, and H411. Positions 408-469 (ERNHSSQNFP…SKLLNKRTWQ (62 aa)) are disordered. The span at 444–461 (PHSRNDKTKGQEIKERSK) shows a compositional bias: basic and acidic residues. The segment at 524–546 (VKYGECGQGFSVKSDVITHQRTH) adopts a C2H2-type 2; degenerate zinc-finger fold. 12 C2H2-type zinc fingers span residues 552 to 574 (YVCRECGRGFSWKSHLLIHQRIH), 580 to 602 (YVCRECGRGFSWQSVLLTHQRTH), 608 to 630 (YVCRECGRGFSRQSVLLTHQRRH), 636 to 658 (YVCRECGRGFSRQSVLLTHQRRH), 664 to 686 (YVCRECGRGFSWQSVLLTHQRTH), 692 to 714 (YVCRECGRGFSWQSVLLTHQRTH), 720 to 742 (YVCRECGRGFSNKSHLLRHQRTH), 748 to 770 (YVCRECGRGFRDKSHLLRHQRTH), 776 to 798 (YVCRECGRGFRDKSNLLSHQRTH), 804 to 826 (YVCRECGRGFSNKSHLLRHQRTH), 832 to 854 (YVCRECGRGFRNKSHLLRHQRTH), and 860 to 882 (YVCRECGRGFSDRSSLCYHQRTH). Positions 722, 725, 738, 742, 750, 753, 766, 770, 778, 781, 794, 798, 806, 809, 822, and 826 each coordinate Zn(2+). The tract at residues 730–820 (SNKSHLLRHQ…RGFSNKSHLL (91 aa)) is DNA-binding.

It belongs to the class V-like SAM-binding methyltransferase superfamily. In terms of assembly, homodimer. Interacts with EHMT2 and CDYL; interaction only takes place when PRDM9 is bound to hotspot DNA. Interacts with CXXC1; this interaction does not link PRDM9-activated recombination hotspot sites with DSB machinery and is not required for the hotspot recognition pathway. Forms a complex with EWSR1, REC8, SYCP3 and SYCP1; complex formation is dependent of phosphorylated form of REC8 and requires PRDM9 bound to hotspot DNA; EWSR1 joins PRDM9 with the chromosomal axis through REC8. Post-translationally, mono-methylated; automethylated. Tri-methylated; automethylated. Mono-methylation is predominant; automethylation is lower and slower than H3 peptide methylation and is in a highest S-adenosyl-L-methionine concentration-dependent. There are two major sites for automethylation at Lys-368 and Lys-374. Lysines can be simultaneously methylated, such as Lys-368(me3)/Lys-372(me1), Lys-368(me1)/Lys-374(me1) and Lys-368(me1)/Lys-372(me1)/Lys-374(me1). Automethylation is an intramolecular (cis) process.

The protein localises to the nucleus. The protein resides in the chromosome. It carries out the reaction L-lysyl-[protein] + S-adenosyl-L-methionine = N(6)-methyl-L-lysyl-[protein] + S-adenosyl-L-homocysteine + H(+). The catalysed reaction is N(6)-methyl-L-lysyl-[protein] + S-adenosyl-L-methionine = N(6),N(6)-dimethyl-L-lysyl-[protein] + S-adenosyl-L-homocysteine + H(+). It catalyses the reaction L-lysyl(4)-[histone H3] + 3 S-adenosyl-L-methionine = N(6),N(6),N(6)-trimethyl-L-lysyl(4)-[histone H3] + 3 S-adenosyl-L-homocysteine + 3 H(+). The enzyme catalyses L-lysyl(36)-[histone H3] + 3 S-adenosyl-L-methionine = N(6),N(6),N(6)-trimethyl-L-lysyl(36)-[histone H3] + 3 S-adenosyl-L-homocysteine + 3 H(+). It carries out the reaction L-lysyl(9)-[histone H3] + 3 S-adenosyl-L-methionine = N(6),N(6),N(6)-trimethyl-L-lysyl(9)-[histone H3] + 3 S-adenosyl-L-homocysteine + 3 H(+). The catalysed reaction is L-lysyl(20)-[histone H4] + S-adenosyl-L-methionine = N(6)-methyl-L-lysyl(20)-[histone H4] + S-adenosyl-L-homocysteine + H(+). It catalyses the reaction N(6)-methyl-L-lysyl(20)-[histone H4] + S-adenosyl-L-methionine = N(6),N(6)-dimethyl-L-lysyl(20)-[histone H4] + S-adenosyl-L-homocysteine + H(+). Its activity is regulated as follows. Inhibited by suramin with an IC(50) of 4.1 uM. Functionally, histone methyltransferase that sequentially mono-, di-, and tri-methylates both 'Lys-4' (H3K4) and 'Lys-36' (H3K36) of histone H3 to produce respectively trimethylated 'Lys-4' (H3K4me3) and trimethylated 'Lys-36' (H3K36me3) histone H3 and plays a key role in meiotic prophase by determining hotspot localization thereby promoting meiotic recombination. Can also methylate all four core histones with H3 being the best substrate and the most highly modified. Is also able, on one hand, to mono and di-methylate H4K20 and on other hand to trimethylate H3K9 with the di-methylated H3K9 as the best substrate. During meiotic prophase, binds specific DNA sequences through its zinc finger domains thereby determining hotspot localization where it promotes local H3K4me3 and H3K36me3 enrichment on the same nucleosomes through its histone methyltransferase activity. Thereby promotes double-stranded breaks (DSB) formation, at this subset of PRDM9-binding sites, that initiates meiotic recombination for the proper meiotic progression. During meiotic progression hotspot-bound PRDM9 interacts with several complexes; in early leptonema binds CDYL and EHMT2 followed by EWSR1 and CXXC1 by the end of leptonema. EWSR1 joins PRDM9 with the chromosomal axis through REC8. In this way, controls the DSB repair pathway, pairing of homologous chromosomes and sex body formation. Moreover plays a central role in the transcriptional activation of genes during early meiotic prophase thanks to H3K4me3 and H3K36me3 enrichment that represents a specific tag for epigenetic transcriptional activation. In addition performs automethylation. Acetylation and phosphorylation of histone H3 attenuate or prevent histone H3 methylation. The sequence is that of Histone-lysine N-methyltransferase PRDM9 from Homo sapiens (Human).